The sequence spans 587 residues: Aspartate--tRNA ligase (587 aa).

Residue Glu174 coordinates L-aspartate. The interval 198-201 is aspartate; the sequence is QITK. Arg220 provides a ligand contact to L-aspartate. ATP-binding positions include 220 to 222 and Gln229; that span reads RDE. Position 443 (His443) interacts with L-aspartate. Glu477 contributes to the ATP binding site. Arg484 lines the L-aspartate pocket. 529–532 is an ATP binding site; it reads GLDR.

It belongs to the class-II aminoacyl-tRNA synthetase family. Type 1 subfamily. In terms of assembly, homodimer.

The protein localises to the cytoplasm. It carries out the reaction tRNA(Asp) + L-aspartate + ATP = L-aspartyl-tRNA(Asp) + AMP + diphosphate. Its function is as follows. Catalyzes the attachment of L-aspartate to tRNA(Asp) in a two-step reaction: L-aspartate is first activated by ATP to form Asp-AMP and then transferred to the acceptor end of tRNA(Asp). This Streptococcus pneumoniae serotype 19F (strain G54) protein is Aspartate--tRNA ligase.